Here is a 582-residue protein sequence, read N- to C-terminus: Proline--tRNA ligase (582 aa).

The protein belongs to the class-II aminoacyl-tRNA synthetase family. ProS type 1 subfamily. In terms of assembly, homodimer.

The protein resides in the cytoplasm. The enzyme catalyses tRNA(Pro) + L-proline + ATP = L-prolyl-tRNA(Pro) + AMP + diphosphate. Functionally, catalyzes the attachment of proline to tRNA(Pro) in a two-step reaction: proline is first activated by ATP to form Pro-AMP and then transferred to the acceptor end of tRNA(Pro). As ProRS can inadvertently accommodate and process non-cognate amino acids such as alanine and cysteine, to avoid such errors it has two additional distinct editing activities against alanine. One activity is designated as 'pretransfer' editing and involves the tRNA(Pro)-independent hydrolysis of activated Ala-AMP. The other activity is designated 'posttransfer' editing and involves deacylation of mischarged Ala-tRNA(Pro). The misacylated Cys-tRNA(Pro) is not edited by ProRS. This is Proline--tRNA ligase from Mycobacterium bovis (strain ATCC BAA-935 / AF2122/97).